Reading from the N-terminus, the 336-residue chain is Holliday junction branch migration complex subunit RuvB (336 aa).

The tract at residues 4–185 (MDERLLSGES…FGVLSRLEYY (182 aa)) is large ATPase domain (RuvB-L). ATP-binding positions include leucine 24, arginine 25, glycine 66, lysine 69, threonine 70, threonine 71, 132–134 (EDF), arginine 175, tyrosine 185, and arginine 222. Threonine 70 is a binding site for Mg(2+). Positions 186 to 256 (TVDQLSAIVE…ITQMALELLQ (71 aa)) are small ATPAse domain (RuvB-S). Residues 259 to 336 (KLGLDHIDHK…EHFGMEMPKV (78 aa)) form a head domain (RuvB-H) region. Arginine 314 and arginine 319 together coordinate DNA.

It belongs to the RuvB family. Homohexamer. Forms an RuvA(8)-RuvB(12)-Holliday junction (HJ) complex. HJ DNA is sandwiched between 2 RuvA tetramers; dsDNA enters through RuvA and exits via RuvB. An RuvB hexamer assembles on each DNA strand where it exits the tetramer. Each RuvB hexamer is contacted by two RuvA subunits (via domain III) on 2 adjacent RuvB subunits; this complex drives branch migration. In the full resolvosome a probable DNA-RuvA(4)-RuvB(12)-RuvC(2) complex forms which resolves the HJ.

Its subcellular location is the cytoplasm. It catalyses the reaction ATP + H2O = ADP + phosphate + H(+). In terms of biological role, the RuvA-RuvB-RuvC complex processes Holliday junction (HJ) DNA during genetic recombination and DNA repair, while the RuvA-RuvB complex plays an important role in the rescue of blocked DNA replication forks via replication fork reversal (RFR). RuvA specifically binds to HJ cruciform DNA, conferring on it an open structure. The RuvB hexamer acts as an ATP-dependent pump, pulling dsDNA into and through the RuvAB complex. RuvB forms 2 homohexamers on either side of HJ DNA bound by 1 or 2 RuvA tetramers; 4 subunits per hexamer contact DNA at a time. Coordinated motions by a converter formed by DNA-disengaged RuvB subunits stimulates ATP hydrolysis and nucleotide exchange. Immobilization of the converter enables RuvB to convert the ATP-contained energy into a lever motion, pulling 2 nucleotides of DNA out of the RuvA tetramer per ATP hydrolyzed, thus driving DNA branch migration. The RuvB motors rotate together with the DNA substrate, which together with the progressing nucleotide cycle form the mechanistic basis for DNA recombination by continuous HJ branch migration. Branch migration allows RuvC to scan DNA until it finds its consensus sequence, where it cleaves and resolves cruciform DNA. This Bacillus thuringiensis (strain Al Hakam) protein is Holliday junction branch migration complex subunit RuvB.